A 186-amino-acid polypeptide reads, in one-letter code: MDFIISFIKNLFGFLTIKKVMILGVENVGKTTLLYNIYKFYSENITTTTLSSLPIPIPTNGFNVESIVIEQVKFDIWDIGGKETNRICYRHYLTSEIDSIIFVFDSSDINSLEESKKEYQYLKNQISLKNVPFLLVANKQDLKQQTIEIDEILKTYFDKSSINETILMSQNNNDDLIKCINWIFSN.

GTP contacts are provided by residues 24-31 (GVENVGKT), 78-82 (DIGGK), and 138-141 (NKQD).

It belongs to the small GTPase superfamily. Arf family.

Binds and exchanges GTP and GDP. This chain is ADP-ribosylation factor-like protein DDB_G0292332, found in Dictyostelium discoideum (Social amoeba).